We begin with the raw amino-acid sequence, 73 residues long: Conotoxin ArMKLT2-022 (73 aa).

Positions 1-22 (MKLTCVLIIAVLFLTACQLTTG) are cleaved as a signal peptide. A propeptide spanning residues 23–40 (EQKDHAQRSADRNSKLTR) is cleaved from the precursor. At glutamine 41 the chain carries Pyrrolidone carboxylic acid. Intrachain disulfides connect cysteine 42–cysteine 56, cysteine 49–cysteine 60, and cysteine 55–cysteine 67.

It belongs to the conotoxin O1 superfamily. As to expression, expressed by the venom duct.

The protein resides in the secreted. The chain is Conotoxin ArMKLT2-022 from Conus arenatus (Sand-dusted cone).